The primary structure comprises 88 residues: MANIKQQKKRNKTNEKRRLRNISFKSATKTIVKQVKIAVEQADKAKALANLSLAYQKLDKGASKKIYHANFVNRNKANLQKLVNTILS.

Residues 1-20 (MANIKQQKKRNKTNEKRRLR) are disordered.

It belongs to the bacterial ribosomal protein bS20 family.

Its function is as follows. Binds directly to 16S ribosomal RNA. This is Small ribosomal subunit protein bS20 from Phytoplasma australiense.